The primary structure comprises 239 residues: Putative ABC transporter ATP-binding protein AlbC (239 aa).

An ABC transporter domain is found at 4–238; it reads LDIHDVSVWY…RREFFEVIGH (235 aa). 37–44 is a binding site for ATP; sequence GVNGAGKT.

This sequence belongs to the ABC transporter superfamily.

Involved in the production of the bacteriocin subtilosin. Required for immunity to subtilosin. This Bacillus subtilis (strain 168) protein is Putative ABC transporter ATP-binding protein AlbC (albC).